The sequence spans 249 residues: uncharacterized protein (249 aa).

This sequence belongs to the ycf73 family.

It localises to the plastid. It is found in the chloroplast. This is an uncharacterized protein from Oryza sativa (Rice).